Here is a 357-residue protein sequence, read N- to C-terminus: Protein XRP2 (357 aa).

Over residues 1-11 (MGCFFSKRRKP) the composition is skewed to basic residues. Residues 1–39 (MGCFFSKRRKPAQGGQQQGASQEPAAGEEKAPQYSWDQR) are disordered. Gly-2 carries N-myristoyl glycine lipidation. The S-palmitoyl cysteine moiety is linked to residue Cys-3. Residues 12-25 (AQGGQQQGASQEPA) show a composition bias toward low complexity. The region spanning 32 to 186 (PQYSWDQRAK…TWSNIHDFTP (155 aa)) is the C-CAP/cofactor C-like domain. GTP contacts are provided by residues 105–106 (GS) and 122–125 (QQFR).

The protein belongs to the TBCC family. In terms of processing, myristoylated on Gly-2; which may be required for membrane targeting. Palmitoylated on Cys-3; which may be required for plasma membrane targeting.

The protein localises to the cell membrane. Acts as a GTPase-activating protein (GAP) for tubulin in concert with tubulin-specific chaperone C, but does not enhance tubulin heterodimerization. Acts as a GTPase-activating protein. May act as guanine nucleotide dissociation inhibitor towards ADP-ribosylation factor-like proteins. The polypeptide is Protein XRP2 (RP2) (Gallus gallus (Chicken)).